The sequence spans 309 residues: Protoheme IX farnesyltransferase (309 aa).

Helical transmembrane passes span 35-55, 64-84, 114-134, 135-155, 161-181, 187-207, 236-256, 257-277, and 289-309; these read IGIVNSNLITTFTGLWLALYF, LHIVFFTLFGSALVIAGSCSI, VLWLGIIFITVGTLSLLMTTV, TAAIVGLIGAITYIFLYTMWS, LNTVVGSISGAVPPVIGWTAV, VVPLVLFLIMFIWQTPHFLAL, IVVWVACLLPLPFYLFSLGVP, FLTVATLLNVGWLALGLYGFK, and FIYSLNYLTILFVAMVIATLW.

The protein belongs to the UbiA prenyltransferase family. Protoheme IX farnesyltransferase subfamily. Interacts with CtaA.

The protein resides in the cell membrane. It carries out the reaction heme b + (2E,6E)-farnesyl diphosphate + H2O = Fe(II)-heme o + diphosphate. It functions in the pathway porphyrin-containing compound metabolism; heme O biosynthesis; heme O from protoheme: step 1/1. Converts heme B (protoheme IX) to heme O by substitution of the vinyl group on carbon 2 of heme B porphyrin ring with a hydroxyethyl farnesyl side group. The protein is Protoheme IX farnesyltransferase of Geobacillus sp. (strain WCH70).